A 587-amino-acid polypeptide reads, in one-letter code: MSNKRTSVEQLISCPICSRKVFFSLINSHLDICGKEKSKPSSRPQTVSSLLAGPKKRKQANSEKFIDLENKDHEIKPGLKSESDDIEIVENESKRFKAAPSTDFAKSIVEPASSRDQLHNDYESRWLQKISHLPLSEKLRPKELRDYVGQQHILSQDNGTLFKYIKQGTIPSMILWGPPGVGKTSLARLLTKTATTSSNESNVGSRYFMIETSATKANTQELRGIFEKSKKEYQLTKRRTVLFIDEIHRFNKVQQDLLLPHVENGDIILIGATTENPSFQLNNALISRCLIFVLEKLNVNELCIVLSRGIALLNKCRKQVWNIENPLKLSRSILEYVVDLSVGDTRRALNMLEMIEVSTRERKADEEELSIDDVRDIIKNNSSNGLNTYYDPKGDNHYDTISAFHKSIRGGDENASLYYLARMLQGGEDPLYVARRMIRIASEDIGLRDSSLLPLAVAAHDAVMKVGLPEADLALAQCCVALARAPKSVELYRAWKKLRAMMSENMYSLASSEIPMHIRNAPTKLMEELGYHKGYKYNPDYIEGKVQQDYFPKEVLEKCPNKTDLKFLDGKHLGDKEDPDLRQSYQG.

A UBZ4-type zinc finger spans residues 11–38 (LISCPICSRKVFFSLINSHLDICGKEKS). 4 residues coordinate Zn(2+): cysteine 14, cysteine 17, histidine 29, and cysteine 33. Positions 35–62 (KEKSKPSSRPQTVSSLLAGPKKRKQANS) are disordered. ATP-binding positions include 177–184 (GPPGVGKT) and 179–185 (PGVGKTS).

Belongs to the AAA ATPase family. RarA/MGS1/WRNIP1 subfamily. Mg(2+) serves as cofactor.

The protein localises to the nucleus. Its function is as follows. Involved in the maintenance of proper DNA topology and chromosome integrity via annealing of single-stranded DNA breaks. Modulates DNA polymerase delta during replication or replication-associated repair. May function as a modulator for SGS1 when DNA is damaged. The sequence is that of DNA-dependent ATPase MGS1 (MGS1) from Saccharomyces cerevisiae (strain ATCC 204508 / S288c) (Baker's yeast).